A 197-amino-acid polypeptide reads, in one-letter code: Cytochrome c oxidase polypeptide 5, mitochondrial (197 aa).

Residues 1-13 (MFLRSVTRAAARS) constitute a mitochondrion transit peptide. Residues 14-129 (SAVPTTGLRS…KGENLKIFFK (116 aa)) are Mitochondrial matrix-facing. A helical membrane pass occupies residues 130–147 (VAQLTLVSFGIFYVIHLF). Topologically, residues 148-197 (AKPQPKTMTKEWQEASNEYAKQEKINPIYGISAEGYEGKGFVQSPPAEKQ) are mitochondrial intermembrane.

It belongs to the cytochrome c oxidase IV family. Component of the cytochrome c oxidase (complex IV, CIV), a multisubunit enzyme composed of a catalytic core of 3 subunits and seevral supernumerary subunits. The complex exists as a monomer or a dimer and forms supercomplexes (SCs) in the inner mitochondrial membrane with ubiquinol-cytochrome c oxidoreductase (cytochrome b-c1 complex, complex III, CIII).

The protein resides in the mitochondrion inner membrane. Its pathway is energy metabolism; oxidative phosphorylation. In terms of biological role, component of the cytochrome c oxidase, the last enzyme in the mitochondrial electron transport chain which drives oxidative phosphorylation. The respiratory chain contains 3 multisubunit complexes succinate dehydrogenase (complex II, CII), ubiquinol-cytochrome c oxidoreductase (cytochrome b-c1 complex, complex III, CIII) and cytochrome c oxidase (complex IV, CIV), that cooperate to transfer electrons derived from NADH and succinate to molecular oxygen, creating an electrochemical gradient over the inner membrane that drives transmembrane transport and the ATP synthase. Cytochrome c oxidase is the component of the respiratory chain that catalyzes the reduction of oxygen to water. Electrons originating from reduced cytochrome c in the intermembrane space (IMS) are transferred via the dinuclear copper A center (CU(A)) of subunit 2 and heme A of subunit 1 to the active site in subunit 1, a binuclear center (BNC) formed by heme A3 and copper B (CU(B)). The BNC reduces molecular oxygen to 2 water molecules using 4 electrons from cytochrome c in the IMS and 4 protons from the mitochondrial matrix. This is Cytochrome c oxidase polypeptide 5, mitochondrial (cox5) from Aspergillus niger.